Consider the following 1771-residue polypeptide: Atrochrysone carboxylic acid synthase (1771 aa).

Residues 38-269 (HLHSKDRRHH…SLPVFGGLCH (232 aa)) are N-terminal acylcarrier protein transacylase domain (SAT). Residues 402-836 (QSKIAIVGMS…GGNTSVVLEE (435 aa)) enclose the Ketosynthase family 3 (KS3) domain. Active-site for beta-ketoacyl synthase activity residues include cysteine 575, histidine 711, and histidine 754. The tract at residues 937–1257 (FAFTGQGASY…LSSLHCAGVE (321 aa)) is malonyl-CoA:ACP transacylase (MAT) domain. Residues 1322-1641 (TSTVQKIVEE…RLLLNRFFSP (320 aa)) form a product template (PT) domain region. An N-terminal hotdog fold region spans residues 1326–1461 (QKIVEESFDG…AKIYYCDASE (136 aa)). A PKS/mFAS DH domain is found at 1326–1636 (QKIVEESFDG…FRRYPRLLLN (311 aa)). Histidine 1358 acts as the Proton acceptor; for dehydratase activity in catalysis. Residues 1488-1636 (IANRFSGRMA…FRRYPRLLLN (149 aa)) form a C-terminal hotdog fold region. The active-site Proton donor; for dehydratase activity is aspartate 1547. The span at 1668–1681 (AATSTTSTTSTAST) shows a compositional bias: low complexity. Residues 1668–1695 (AATSTTSTTSTASTGQPPKVDETSPVDS) form a disordered region. The Carrier domain maps to 1693–1770 (VDSNSTAARA…DLKSWLLEYY (78 aa)). Position 1730 is an O-(pantetheine 4'-phosphoryl)serine (serine 1730).

The enzyme catalyses holo-[ACP] + 8 malonyl-CoA + 8 H(+) = atrochrysone carboxyl-[ACP] + 8 CO2 + 8 CoA + 2 H2O. Its pathway is secondary metabolite biosynthesis. In terms of biological role, non-reducing polyketide synthase; part of the gene cluster that mediates the biosynthesis of geodin, an intermediate in the biosynthesis of other natural products. The pathway begins with the synthesis of atrochrysone thioester by the polyketide synthase (PKS) gedC. The atrochrysone carboxyl ACP thioesterase gedB then breaks the thioester bond and releases the atrochrysone carboxylic acid from gedC. The atrochrysone carboxylic acid is then converted to atrochrysone which is further transformed into emodinanthrone. The next step is performed by the emodinanthrone oxygenase gedH that catalyzes the oxidation of emodinanthrone to emodin. Emodin O-methyltransferase encoded probably by gedA then catalyzes methylation of the 8-hydroxy group of emodin to form questin. Ring cleavage of questin by questin oxidase gedK leads to desmethylsulochrin via several intermediates including questin epoxide. Another methylation step probably catalyzed by methyltransferase gedG leads to the formation of sulochrin which is further converted to dihydrogeodin by the sulochrin halogenase gedL. Finally, the dihydrogeodin oxidase gedJ catalyzes the stereospecific phenol oxidative coupling reaction converting dihydrogeodin to geodin. This chain is Atrochrysone carboxylic acid synthase, found in Aspergillus terreus (strain NIH 2624 / FGSC A1156).